The primary structure comprises 278 residues: S-methyl-5'-thioadenosine phosphorylase (278 aa).

Phosphate contacts are provided by residues Ser13, 55 to 56 (RH), and 88 to 89 (TA). Residue Met190 coordinates substrate. A phosphate-binding site is contributed by Thr191. 214–216 (DYD) contacts substrate.

The protein belongs to the PNP/MTAP phosphorylase family. MTAP subfamily. Homotrimer.

The protein localises to the cytoplasm. Its subcellular location is the nucleus. The catalysed reaction is S-methyl-5'-thioadenosine + phosphate = 5-(methylsulfanyl)-alpha-D-ribose 1-phosphate + adenine. Its pathway is amino-acid biosynthesis; L-methionine biosynthesis via salvage pathway; S-methyl-5-thio-alpha-D-ribose 1-phosphate from S-methyl-5'-thioadenosine (phosphorylase route): step 1/1. Functionally, catalyzes the reversible phosphorylation of S-methyl-5'-thioadenosine (MTA) to adenine and 5-methylthioribose-1-phosphate. Involved in the breakdown of MTA, a major by-product of polyamine biosynthesis. Responsible for the first step in the methionine salvage pathway after MTA has been generated from S-adenosylmethionine. Has broad substrate specificity with 6-aminopurine nucleosides as preferred substrates. This is S-methyl-5'-thioadenosine phosphorylase from Anopheles gambiae (African malaria mosquito).